The chain runs to 233 residues: 3-dehydroquinate dehydratase (233 aa).

3-dehydroquinate contacts are provided by residues 34-36 (ELR) and R64. Residue H118 is the Proton donor/acceptor of the active site. The active-site Schiff-base intermediate with substrate is K145. R185, S205, and Q209 together coordinate 3-dehydroquinate.

Belongs to the type-I 3-dehydroquinase family. Homodimer.

The enzyme catalyses 3-dehydroquinate = 3-dehydroshikimate + H2O. It participates in metabolic intermediate biosynthesis; chorismate biosynthesis; chorismate from D-erythrose 4-phosphate and phosphoenolpyruvate: step 3/7. Its function is as follows. Involved in the third step of the chorismate pathway, which leads to the biosynthesis of aromatic amino acids. Catalyzes the cis-dehydration of 3-dehydroquinate (DHQ) and introduces the first double bond of the aromatic ring to yield 3-dehydroshikimate. This Coxiella burnetii (strain CbuG_Q212) (Coxiella burnetii (strain Q212)) protein is 3-dehydroquinate dehydratase.